The following is a 309-amino-acid chain: Methionyl-tRNA formyltransferase (309 aa).

S112–P115 contacts (6S)-5,6,7,8-tetrahydrofolate.

Belongs to the Fmt family.

It carries out the reaction L-methionyl-tRNA(fMet) + (6R)-10-formyltetrahydrofolate = N-formyl-L-methionyl-tRNA(fMet) + (6S)-5,6,7,8-tetrahydrofolate + H(+). Its function is as follows. Attaches a formyl group to the free amino group of methionyl-tRNA(fMet). The formyl group appears to play a dual role in the initiator identity of N-formylmethionyl-tRNA by promoting its recognition by IF2 and preventing the misappropriation of this tRNA by the elongation apparatus. This chain is Methionyl-tRNA formyltransferase, found in Bartonella quintana (strain Toulouse) (Rochalimaea quintana).